Reading from the N-terminus, the 179-residue chain is Transcription factor 21 (179 aa).

Residues 20 to 86 form a disordered region; that stretch reads CDGIKLDPNK…KQVQRNAANA (67 aa). Polar residues predominate over residues 34–46; that stretch reads SNDSNEESSTCDN. A compositionally biased stretch (basic residues) spans 50 to 64; that stretch reads KKGRGTSGKRRKASS. The segment covering 70-80 has biased composition (polar residues); sequence GTINQEGKQVQ. One can recognise a bHLH domain in the interval 79–131; it reads VQRNAANARERARMRVLSKAFSRLKTTLPWVPPDTKLSKLDTLRLASSYIAHL.

As to quaternary structure, efficient DNA binding requires dimerization with another bHLH protein. At the start of neurulation (stage 13), expressed in the pronephros. At tailbud stage (stage 25-28), expression is high in the anterior-most branchial arch and pronephric glomus. At stage 40, staining persists in the glomus and in the epicardium region of the heart, and at stage 42, expression is higher in the glomus than in the kidney tubule or duct. In adults, expression is highest in the rectum and the spleen, with significant expression in the duodenum, heart, kidney, lungs, pancreas, skin, liver and muscle.

Its subcellular location is the nucleus. Functionally, involved in epithelial-mesenchymal interactions in kidney and lung morphogenesis that include epithelial differentiation and branching morphogenesis. In Xenopus laevis (African clawed frog), this protein is Transcription factor 21 (tcf21).